We begin with the raw amino-acid sequence, 110 residues long: Small ribosomal subunit protein mS33 (110 aa).

A compositionally biased stretch (basic residues) spans 84–95 (KRRGKGAPKKMK). The disordered stretch occupies residues 84 to 110 (KRRGKGAPKKMKKDAAATAKGKGKKKK).

This sequence belongs to the mitochondrion-specific ribosomal protein mS33 family. In terms of assembly, component of the mitochondrial small ribosomal subunit (mt-SSU). Mature yeast 74S mitochondrial ribosomes consist of a small (37S) and a large (54S) subunit. The 37S small subunit contains a 15S ribosomal RNA (15S mt-rRNA) and 34 different proteins. The 54S large subunit contains a 21S rRNA (21S mt-rRNA) and 46 different proteins.

The protein localises to the mitochondrion. Functionally, component of the mitochondrial ribosome (mitoribosome), a dedicated translation machinery responsible for the synthesis of mitochondrial genome-encoded proteins, including at least some of the essential transmembrane subunits of the mitochondrial respiratory chain. The mitoribosomes are attached to the mitochondrial inner membrane and translation products are cotranslationally integrated into the membrane. The chain is Small ribosomal subunit protein mS33 (RSM27) from Saccharomyces cerevisiae (strain ATCC 204508 / S288c) (Baker's yeast).